A 255-amino-acid polypeptide reads, in one-letter code: 1-(5-phosphoribosyl)-5-[(5-phosphoribosylamino)methylideneamino] imidazole-4-carboxamide isomerase (255 aa).

Asp8 serves as the catalytic Proton acceptor. Asp129 functions as the Proton donor in the catalytic mechanism.

It belongs to the HisA/HisF family.

Its subcellular location is the cytoplasm. It carries out the reaction 1-(5-phospho-beta-D-ribosyl)-5-[(5-phospho-beta-D-ribosylamino)methylideneamino]imidazole-4-carboxamide = 5-[(5-phospho-1-deoxy-D-ribulos-1-ylimino)methylamino]-1-(5-phospho-beta-D-ribosyl)imidazole-4-carboxamide. The protein operates within amino-acid biosynthesis; L-histidine biosynthesis; L-histidine from 5-phospho-alpha-D-ribose 1-diphosphate: step 4/9. This Gloeobacter violaceus (strain ATCC 29082 / PCC 7421) protein is 1-(5-phosphoribosyl)-5-[(5-phosphoribosylamino)methylideneamino] imidazole-4-carboxamide isomerase.